A 530-amino-acid chain; its full sequence is Arginine--tRNA ligase (530 aa).

The 'HIGH' region signature appears at 113–123 (ANPTGPLHIGH).

Belongs to the class-I aminoacyl-tRNA synthetase family. Monomer.

It is found in the cytoplasm. It carries out the reaction tRNA(Arg) + L-arginine + ATP = L-arginyl-tRNA(Arg) + AMP + diphosphate. The sequence is that of Arginine--tRNA ligase from Campylobacter jejuni subsp. jejuni serotype O:23/36 (strain 81-176).